Here is a 141-residue protein sequence, read N- to C-terminus: Small ribosomal subunit protein uS8c (141 aa).

The protein belongs to the universal ribosomal protein uS8 family. As to quaternary structure, part of the 30S ribosomal subunit.

The protein resides in the plastid. The protein localises to the chloroplast. One of the primary rRNA binding proteins, it binds directly to 16S rRNA central domain where it helps coordinate assembly of the platform of the 30S subunit. The sequence is that of Small ribosomal subunit protein uS8c (rps8) from Chlamydomonas reinhardtii (Chlamydomonas smithii).